The primary structure comprises 527 residues: Exodeoxyribonuclease 7 large subunit (527 aa).

Residues 499 to 527 (AGEEGAPPPAAPKKRASRPVVPTKQGSLF) are disordered.

Belongs to the XseA family. Heterooligomer composed of large and small subunits.

Its subcellular location is the cytoplasm. It catalyses the reaction Exonucleolytic cleavage in either 5'- to 3'- or 3'- to 5'-direction to yield nucleoside 5'-phosphates.. In terms of biological role, bidirectionally degrades single-stranded DNA into large acid-insoluble oligonucleotides, which are then degraded further into small acid-soluble oligonucleotides. This Sinorhizobium fredii (strain NBRC 101917 / NGR234) protein is Exodeoxyribonuclease 7 large subunit.